A 329-amino-acid chain; its full sequence is GTP 3',8-cyclase (329 aa).

The 227-residue stretch at 8 to 234 (AFARKFYYLR…QIRQRSDGPA (227 aa)) folds into the Radical SAM core domain. Residue R17 coordinates GTP. 2 residues coordinate [4Fe-4S] cluster: C24 and C28. Y30 contributes to the S-adenosyl-L-methionine binding site. C31 lines the [4Fe-4S] cluster pocket. R68 provides a ligand contact to GTP. S-adenosyl-L-methionine is bound at residue G72. Residue T99 coordinates GTP. S-adenosyl-L-methionine is bound at residue S123. K160 is a GTP binding site. M194 serves as a coordination point for S-adenosyl-L-methionine. Residues C257 and C260 each contribute to the [4Fe-4S] cluster site. 262-264 (RLR) serves as a coordination point for GTP. Position 274 (C274) interacts with [4Fe-4S] cluster.

The protein belongs to the radical SAM superfamily. MoaA family. In terms of assembly, monomer and homodimer. It depends on [4Fe-4S] cluster as a cofactor.

It catalyses the reaction GTP + AH2 + S-adenosyl-L-methionine = (8S)-3',8-cyclo-7,8-dihydroguanosine 5'-triphosphate + 5'-deoxyadenosine + L-methionine + A + H(+). Its pathway is cofactor biosynthesis; molybdopterin biosynthesis. Its function is as follows. Catalyzes the cyclization of GTP to (8S)-3',8-cyclo-7,8-dihydroguanosine 5'-triphosphate. This Klebsiella pneumoniae subsp. pneumoniae (strain ATCC 700721 / MGH 78578) protein is GTP 3',8-cyclase.